The chain runs to 96 residues: UPF0235 protein YggU (96 aa).

It belongs to the UPF0235 family.

The chain is UPF0235 protein YggU from Salmonella agona (strain SL483).